A 471-amino-acid chain; its full sequence is Serine/threonine-protein kinase AtPK2/AtPK19 (471 aa).

The segment at 1-21 (MVSSQCSVANKNQTGKPFQKH) is disordered. A Protein kinase domain is found at 140-395 (FEVLKVVGQG…AEEIKKHKWF (256 aa)). ATP is bound by residues 146 to 154 (VGQGAFGKV) and lysine 169. Aspartate 263 acts as the Proton acceptor in catalysis. Residues 281–307 (DFGLAKEFEENTRSNSMCGTTEYMAPE) are activation loop. Serine 296 is subject to Phosphoserine; by PDPK1. The 71-residue stretch at 396-466 (KAINWKKLEA…VRPPHSFLHR (71 aa)) folds into the AGC-kinase C-terminal domain. A Phosphothreonine; by TOR modification is found at threonine 455.

The protein belongs to the protein kinase superfamily. AGC Ser/Thr protein kinase family. S6 kinase subfamily. In terms of assembly, interacts with TAP46. Binds to MRF1. Post-translationally, undergoes serine-specific autophosphorylation. Phosphorylated at Thr-455 by TOR.

It carries out the reaction L-seryl-[protein] + ATP = O-phospho-L-seryl-[protein] + ADP + H(+). The enzyme catalyses L-threonyl-[protein] + ATP = O-phospho-L-threonyl-[protein] + ADP + H(+). Activated by PDK1. Downstream effector of TOR signaling pathway. May be involved in adaptation of plant to cold or high-salt conditions. Mediates the phosphorylation of MRFs (e.g. MRF1). This chain is Serine/threonine-protein kinase AtPK2/AtPK19 (ATPK2), found in Arabidopsis thaliana (Mouse-ear cress).